A 288-amino-acid chain; its full sequence is Ribosomal RNA small subunit methyltransferase A (288 aa).

The span at 1-14 shows a compositional bias: polar residues; it reads MSKNQGGNKHQGGS. Residues 1-21 are disordered; the sequence is MSKNQGGNKHQGGSKTHLGHR. The S-adenosyl-L-methionine site is built by N29, L31, G56, E77, D102, and N122.

Belongs to the class I-like SAM-binding methyltransferase superfamily. rRNA adenine N(6)-methyltransferase family. RsmA subfamily.

The protein resides in the cytoplasm. It carries out the reaction adenosine(1518)/adenosine(1519) in 16S rRNA + 4 S-adenosyl-L-methionine = N(6)-dimethyladenosine(1518)/N(6)-dimethyladenosine(1519) in 16S rRNA + 4 S-adenosyl-L-homocysteine + 4 H(+). Functionally, specifically dimethylates two adjacent adenosines (A1518 and A1519) in the loop of a conserved hairpin near the 3'-end of 16S rRNA in the 30S particle. May play a critical role in biogenesis of 30S subunits. This chain is Ribosomal RNA small subunit methyltransferase A, found in Idiomarina loihiensis (strain ATCC BAA-735 / DSM 15497 / L2-TR).